Reading from the N-terminus, the 72-residue chain is Phaiodotoxin-2 (72 aa).

Positions 1–72 constitute an LCN-type CS-alpha/beta domain; the sequence is KFIRHKDESF…CFGALESKCA (72 aa). Cystine bridges form between C13–C38, C23–C50, C27–C52, and C63–C71.

Belongs to the long (4 C-C) scorpion toxin superfamily. Sodium channel inhibitor family. Expressed by the venom gland.

It localises to the secreted. Its function is as follows. Sodium channel (Nav) specific neurotoxin. The sequence is that of Phaiodotoxin-2 from Anuroctonus phaiodactylus (Mafia scorpion).